The chain runs to 515 residues: Anthranilate synthase component 1 (515 aa).

Residues Thr-40 and 291–293 (PYM) each bind L-tryptophan. 328-329 (GT) provides a ligand contact to chorismate. Glu-361 serves as a coordination point for Mg(2+). Chorismate is bound by residues Tyr-449, Arg-469, 483–485 (GAG), and Gly-485. Glu-498 contacts Mg(2+).

Belongs to the anthranilate synthase component I family. Heterotetramer consisting of two non-identical subunits: a beta subunit (TrpG) and a large alpha subunit (TrpE). Requires Mg(2+) as cofactor.

The enzyme catalyses chorismate + L-glutamine = anthranilate + pyruvate + L-glutamate + H(+). Its pathway is amino-acid biosynthesis; L-tryptophan biosynthesis; L-tryptophan from chorismate: step 1/5. Its activity is regulated as follows. Feedback inhibited by tryptophan. Its function is as follows. Part of a heterotetrameric complex that catalyzes the two-step biosynthesis of anthranilate, an intermediate in the biosynthesis of L-tryptophan. In the first step, the glutamine-binding beta subunit (TrpG) of anthranilate synthase (AS) provides the glutamine amidotransferase activity which generates ammonia as a substrate that, along with chorismate, is used in the second step, catalyzed by the large alpha subunit of AS (TrpE) to produce anthranilate. In the absence of TrpG, TrpE can synthesize anthranilate directly from chorismate and high concentrations of ammonia. This Buchnera aphidicola subsp. Schizaphis graminum (strain Sg) protein is Anthranilate synthase component 1 (trpE).